Reading from the N-terminus, the 614-residue chain is Vitamin B12 transporter BtuB (614 aa).

An N-terminal signal peptide occupies residues Met1–Ala20. The short motif at Asp26 to Ile33 is the TonB box element. The TBDR plug domain maps to Pro38–Thr152. Cyanocob(III)alamin contacts are provided by residues Leu83, Ser85, Asn92, and Val110–Ser111. Positions Glu155–Phe614 constitute a TBDR beta-barrel domain. The next 3 membrane-spanning stretches (beta stranded) occupy residues Thr158–Gly165, Tyr169–Gln178, and Thr184–Thr195. The Ca(2+) site is built by Asp199, Gln211, Asp213, and Asp215. The next 2 membrane-spanning stretches (beta stranded) occupy residues Phe217–Glu227 and Asp232–Asn248. Residues Tyr249 and Asp250 each contribute to the Ca(2+) site. Position 251 (Ala251) interacts with cyanocob(III)alamin. Residue Asp261 coordinates Ca(2+). A run of 14 beta stranded transmembrane segments spans residues Arg263–Asn277, Glu279–Asn296, Thr309–Ile325, His328–Trp337, Tyr353–Gly369, Phe371–Asp381, Phe385–Ile400, Tyr403–Asn417, Lys434–Glu443, Val449–Asn458, Tyr473–Phe490, Pro494–Ala509, Arg517–Trp529, and Asp535–Asp550. Thr309 provides a ligand contact to cyanocob(III)alamin. A cyanocob(III)alamin-binding site is contributed by Arg517. Tyr551 lines the cyanocob(III)alamin pocket. 3 beta stranded membrane-spanning segments follow: residues Thr558 to Ala572, Ile585 to Val596, and Ala602 to Phe614. The TonB C-terminal box signature appears at Tyr597–Phe614.

The protein belongs to the TonB-dependent receptor family. BtuB (TC 1.B.14.3.1) subfamily.

Its subcellular location is the cell outer membrane. Its function is as follows. Involved in the active translocation of vitamin B12 (cyanocobalamin) across the outer membrane to the periplasmic space. It derives its energy for transport by interacting with the trans-periplasmic membrane protein TonB. The polypeptide is Vitamin B12 transporter BtuB (Shigella flexneri serotype 5b (strain 8401)).